The sequence spans 944 residues: snRNA-activating protein complex subunit 4 homolog (944 aa).

Residues 1 to 22 are disordered; that stretch reads MSDLVMFEPGASTSTDVPTNTD. Positions 11–22 are enriched in polar residues; that stretch reads ASTSTDVPTNTD. The region spanning 177-244 is the Myb-like 1 domain; the sequence is TSNFDRRQWT…AVKSKWYNEL (68 aa). Residues 245-301 enclose the HTH myb-type 1 domain; sequence NPKWNKEHWSNEEVEKLKYLRESPKFVSWPMLALNLGTNRTSYQCMEKYKTEVSQHS. A DNA-binding region (H-T-H motif) is located at residues 273-297; the sequence is WPMLALNLGTNRTSYQCMEKYKTEV. The region spanning 304–350 is the Myb-like 2 domain; that stretch reads WSQDEDTKLIALTKITSINGHIQWDKVAQCMPGRTRQQVRTRFSHTL. HTH myb-type domains follow at residues 351–406 and 407–459; these read DASV…NRSA and HVNE…AAKL. 2 DNA-binding regions (H-T-H motif) span residues 379-402 and 432-455; these read WAKV…TNVL and WAKC…LQLI. Residues 911–921 are compositionally biased toward low complexity; the sequence is ARPARPPRSSA. The segment at 911–935 is disordered; sequence ARPARPPRSSAGTPTPSHVSIDTES. Positions 922–935 are enriched in polar residues; the sequence is GTPTPSHVSIDTES.

As to expression, broadly expressed in all tissues, including head, vulva and tail.

It is found in the nucleus. In terms of biological role, binds to the promoter regions of RNA polymerase II and III small-nuclear RNA genes, type 3 RNA polymerase III non-coding RNA genes, small nucleolar RNAs and transfer RNA genes. Required for expression of mature 21U-RNAs. The chain is snRNA-activating protein complex subunit 4 homolog from Caenorhabditis elegans.